Here is a 576-residue protein sequence, read N- to C-terminus: Eukaryotic translation initiation factor 3 subunit D (576 aa).

Residues 103 to 176 (DSTKTRFGRG…KDYDKPQRNR (74 aa)) form a disordered region. A compositionally biased stretch (gly residues) spans 110–122 (GRGGLARGRGQRG). Basic and acidic residues predominate over residues 165 to 176 (GWKDYDKPQRNR). The RNA gate stretch occupies residues 304–318 (TLDMVTVNENAADAP).

It belongs to the eIF-3 subunit D family. In terms of assembly, component of the eukaryotic translation initiation factor 3 (eIF-3) complex.

It is found in the cytoplasm. Functionally, mRNA cap-binding component of the eukaryotic translation initiation factor 3 (eIF-3) complex, which is involved in protein synthesis of a specialized repertoire of mRNAs and, together with other initiation factors, stimulates binding of mRNA and methionyl-tRNAi to the 40S ribosome. The eIF-3 complex specifically targets and initiates translation of a subset of mRNAs involved in cell proliferation. In the eIF-3 complex, eif3d specifically recognizes and binds the 7-methylguanosine cap of a subset of mRNAs. The chain is Eukaryotic translation initiation factor 3 subunit D from Botryotinia fuckeliana (strain B05.10) (Noble rot fungus).